A 3106-amino-acid chain; its full sequence is Cilia- and flagella-associated protein 54 (3106 aa).

3 stretches are compositionally biased toward low complexity: residues 1–24, 34–48, and 2356–2368; these read MASSRSSSSSSEESPDSETSVSPV, STAVLKSPSESKSSS, and ESCSPTSPETSTT. 2 disordered regions span residues 1 to 58 and 2354 to 2374; these read MASS…THSE and PEESCSPTSPETSTTESKDDS.

The protein belongs to the CFAP54 family. Expressed at high level in the testis and at a low level in the lung and brain.

The protein resides in the cytoplasm. The protein localises to the cytoskeleton. It localises to the cilium axoneme. Functionally, required for assembly and function of cilia and flagella. In Mus musculus (Mouse), this protein is Cilia- and flagella-associated protein 54.